Consider the following 235-residue polypeptide: Aspartate/glutamate leucyltransferase (235 aa).

The protein belongs to the R-transferase family. Bpt subfamily.

Its subcellular location is the cytoplasm. The enzyme catalyses N-terminal L-glutamyl-[protein] + L-leucyl-tRNA(Leu) = N-terminal L-leucyl-L-glutamyl-[protein] + tRNA(Leu) + H(+). It carries out the reaction N-terminal L-aspartyl-[protein] + L-leucyl-tRNA(Leu) = N-terminal L-leucyl-L-aspartyl-[protein] + tRNA(Leu) + H(+). Its function is as follows. Functions in the N-end rule pathway of protein degradation where it conjugates Leu from its aminoacyl-tRNA to the N-termini of proteins containing an N-terminal aspartate or glutamate. This chain is Aspartate/glutamate leucyltransferase, found in Pseudomonas entomophila (strain L48).